A 33-amino-acid chain; its full sequence is Cytochrome b6-f complex subunit 8 (33 aa).

Residues 2-22 (LFTVAWASLAAMFSFSIAMVV) traverse the membrane as a helical segment.

It belongs to the PetN family. In terms of assembly, the 4 large subunits of the cytochrome b6-f complex are cytochrome b6, subunit IV (17 kDa polypeptide, PetD), cytochrome f and the Rieske protein, while the 4 small subunits are PetG, PetL, PetM and PetN. The complex functions as a dimer.

The protein localises to the cellular thylakoid membrane. In terms of biological role, component of the cytochrome b6-f complex, which mediates electron transfer between photosystem II (PSII) and photosystem I (PSI), cyclic electron flow around PSI, and state transitions. This is Cytochrome b6-f complex subunit 8 from Synechococcus sp. (strain CC9902).